The sequence spans 450 residues: Hyaluronidase-1 (450 aa).

Residues 1–35 (MRPFSLEVSLHLPWAMAAHLLPVCTLFLNLLSMTQ) form the signal peptide. Disulfide bonds link Cys58–Cys348 and Cys222–Cys236. Asn85 is a glycosylation site (N-linked (GlcNAc...) asparagine). Glu146 serves as the catalytic Proton donor. N-linked (GlcNAc...) asparagine glycans are attached at residues Asn231 and Asn365. Disulfide bonds link Cys373–Cys384, Cys378–Cys433, and Cys435–Cys444. The N-linked (GlcNAc...) asparagine glycan is linked to Asn398. Positions 433–444 (CRCYRGWRGTRC) constitute an EGF-like domain.

The protein belongs to the glycosyl hydrolase 56 family.

It localises to the secreted. The protein resides in the lysosome. It catalyses the reaction Random hydrolysis of (1-&gt;4)-linkages between N-acetyl-beta-D-glucosamine and D-glucuronate residues in hyaluronate.. In terms of biological role, may have a role in promoting tumor progression. May block the TGFB1-enhanced cell growth. This is Hyaluronidase-1 (HYAL1) from Bos taurus (Bovine).